Here is a 128-residue protein sequence, read N- to C-terminus: MAGSVPWAASRRLWGWVPSACRSFSLGVPRLAFVRLTLPPPKVVDRWNEKRALFGVYDNIGILGNFEKHPKELIKGPVWLRGWRGNELQRCVRKKKFVGNRMFIEDLHNLNKRISYLYKHFNRHGKYR.

The N-terminal 31 residues, 1–31, are a transit peptide targeting the mitochondrion; the sequence is MAGSVPWAASRRLWGWVPSACRSFSLGVPRL.

Belongs to the mitochondrion-specific ribosomal protein mL51 family. Component of the mitochondrial ribosome large subunit (39S) which comprises a 16S rRNA and about 50 distinct proteins. Interacts with OXA1L.

It localises to the mitochondrion. This is Large ribosomal subunit protein mL51 (Mrpl51) from Mus musculus (Mouse).